Consider the following 471-residue polypeptide: Trehalose-binding lipoprotein LpqY (471 aa).

The signal sequence occupies residues 1–28; the sequence is MDGRQVVRARRWCATAAVALMTASTVAA. Cys29 carries the N-palmitoyl cysteine lipid modification. Cys29 is lipidated: S-diacylglycerol cysteine. The alpha,alpha-trehalose site is built by Asn45, Glu46, Gln79, Asp100, Asn154, Tyr198, Trp279, Tyr281, Gly354, and Arg424. Cys57 and Cys375 are disulfide-bonded.

The protein belongs to the bacterial solute-binding protein 1 family. As to quaternary structure, monomer. The complex is composed of two ATP-binding proteins (SugC), two transmembrane proteins (SugA and SugB) and a solute-binding protein (LpqY).

The protein resides in the cell inner membrane. Functionally, part of the ABC transporter complex LpqY-SugA-SugB-SugC, which is highly specific for uptake of trehalose. Involved in the recycling of extracellular trehalose released from trehalose-containing molecules synthesized by M.thermoresistibile. Trehalose uptake is essential for virulence. Binds deuterated trehalose with similar high affinity to trehalose, trehalose analogs including galactotrehalose, 4-azido-4-deoxy-trehalose, 6-azido-6-deoxy-trehalose, 3-azido-3-deoxy-trehalose and mannotrehalose in the order of decreasing affinity, respectively, and 2-azido-2-deoxy-trehalose and kojibiose (alpha1,2-glycosidic bond) with very low affinity. Does not recognize single glucose, 6-amino-6-deoxy-trehalose, trehalose-6-phosphate, nigerose (alpha1,3-glycosidic bond), maltose (alpha1,4-glycosidic bond), isomaltose (alpha1,6-glycosidic bond) or glycerophosphocholine. Decreased recognition of alpha,beta-trehalose and almost no recognition of beta,beta-trehalose. Substrate specificity indicates a strict requirement for an alpha1,1-linked disaccharide. The sequence is that of Trehalose-binding lipoprotein LpqY from Mycolicibacterium thermoresistibile (strain ATCC 19527 / DSM 44167 / CIP 105390 / JCM 6362 / NCTC 10409 / 316) (Mycobacterium thermoresistibile).